The sequence spans 62 residues: Large ribosomal subunit protein eL37 (62 aa).

Positions 20, 23, 35, and 38 each coordinate Zn(2+). The segment at 20–38 (CRRCGRVSYNVKKGYCAAC) adopts a C4-type zinc-finger fold.

Belongs to the eukaryotic ribosomal protein eL37 family. As to quaternary structure, part of the 50S ribosomal subunit. The cofactor is Zn(2+).

In terms of biological role, binds to the 23S rRNA. In Pyrococcus furiosus (strain ATCC 43587 / DSM 3638 / JCM 8422 / Vc1), this protein is Large ribosomal subunit protein eL37.